Consider the following 64-residue polypeptide: Weak toxin CM-9a (64 aa).

Cystine bridges form between cysteine 3/cysteine 24, cysteine 6/cysteine 11, cysteine 17/cysteine 41, cysteine 45/cysteine 56, and cysteine 57/cysteine 62.

It belongs to the three-finger toxin family. Ancestral subfamily. Orphan group II sub-subfamily. As to expression, expressed by the venom gland.

It localises to the secreted. Binds with low affinity to muscular (alpha-1-beta-1-delta-epsilon/CHRNA1-CHRNB1-CHRND-CHRNE) and very low affinity to neuronal (alpha-7/CHRNA7) nicotinic acetylcholine receptor (nAChR). The protein is Weak toxin CM-9a of Naja kaouthia (Monocled cobra).